The following is a 163-amino-acid chain: 6,7-dimethyl-8-ribityllumazine synthase (163 aa).

Residues Phe-27, 58–60 (ALE), and 87–89 (CVV) contribute to the 5-amino-6-(D-ribitylamino)uracil site. Residue 92–93 (DT) coordinates (2S)-2-hydroxy-3-oxobutyl phosphate. The Proton donor role is filled by His-95. Asn-120 contributes to the 5-amino-6-(D-ribitylamino)uracil binding site. Arg-134 is a (2S)-2-hydroxy-3-oxobutyl phosphate binding site.

This sequence belongs to the DMRL synthase family.

It carries out the reaction (2S)-2-hydroxy-3-oxobutyl phosphate + 5-amino-6-(D-ribitylamino)uracil = 6,7-dimethyl-8-(1-D-ribityl)lumazine + phosphate + 2 H2O + H(+). Its pathway is cofactor biosynthesis; riboflavin biosynthesis; riboflavin from 2-hydroxy-3-oxobutyl phosphate and 5-amino-6-(D-ribitylamino)uracil: step 1/2. Catalyzes the formation of 6,7-dimethyl-8-ribityllumazine by condensation of 5-amino-6-(D-ribitylamino)uracil with 3,4-dihydroxy-2-butanone 4-phosphate. This is the penultimate step in the biosynthesis of riboflavin. The protein is 6,7-dimethyl-8-ribityllumazine synthase of Rhodopseudomonas palustris (strain BisA53).